A 142-amino-acid chain; its full sequence is Transcriptional regulator MraZ (142 aa).

SpoVT-AbrB domains are found at residues 5 to 51 (ASAL…PRPE) and 77 to 120 (AMDV…DSQT).

The protein belongs to the MraZ family. Forms oligomers.

The protein localises to the cytoplasm. Its subcellular location is the nucleoid. This is Transcriptional regulator MraZ from Burkholderia cenocepacia (strain ATCC BAA-245 / DSM 16553 / LMG 16656 / NCTC 13227 / J2315 / CF5610) (Burkholderia cepacia (strain J2315)).